Reading from the N-terminus, the 431-residue chain is Helix-loop-helix protein 11 (431 aa).

The segment at 88–109 (LANRSLSQPAPLSPTSLDPDRR) is disordered. Positions 91 to 103 (RSLSQPAPLSPTS) are enriched in polar residues. The bHLH domain maps to 112-163 (MRRQIANCNERRRMQSINAGFLALRALLPRKEGEKLSKAAILQQTADMVHQL). Polar residues-rich tracts occupy residues 226–241 (TTTS…PRSN) and 248–257 (LPSSYASSAL). A disordered region spans residues 226-311 (TTTSSQASSP…PPPTLPSLET (86 aa)). The segment covering 274 to 291 (TTSTPLSLLTLNGSPTSS) has biased composition (low complexity).

As to expression, expressed in the pharynx, nerve cords, the H-shaped excretory cell, vulva muscles, and the anal depressor (at protein level). Expressed in the intestine (at protein level). In males, it is also expressed in the spicules and hyp7 cells of the hypodermis (at protein level).

The protein localises to the nucleus. Functionally, transcriptional regulator. Component of a feedback loop involving atfs-1, atgl-1 and hlh-11. Binds to the promoter of the atgl-1 lipase to negatively regulate the expression of atgl-1, and thereby promoting fat oxidation in response to mitochondrial stress and mitochondrial respiration in the intestine. In addition, functions with atfs-1 to maintain lifespan. May have a role in fertility and in positively regulating body size. In Caenorhabditis elegans, this protein is Helix-loop-helix protein 11.